The following is a 211-amino-acid chain: Phosphatidylglycerophosphatase C (211 aa).

Over 1 to 33 (MATHERRVVFFDLDGTLHQQDMFGSFLRYLLRR) the chain is Cytoplasmic. A helical membrane pass occupies residues 34–54 (QPLNALLVLPLLPIIAIALLI). At 55–211 (KGRAARWPMS…TPRGELQQLE (157 aa)) the chain is on the periplasmic side.

Requires Mg(2+) as cofactor.

It localises to the cell inner membrane. The catalysed reaction is a 1,2-diacyl-sn-glycero-3-phospho-(1'-sn-glycero-3'-phosphate) + H2O = a 1,2-diacyl-sn-glycero-3-phospho-(1'-sn-glycerol) + phosphate. Its pathway is phospholipid metabolism; phosphatidylglycerol biosynthesis; phosphatidylglycerol from CDP-diacylglycerol: step 2/2. Functionally, lipid phosphatase which dephosphorylates phosphatidylglycerophosphate (PGP) to phosphatidylglycerol (PG). The protein is Phosphatidylglycerophosphatase C (pgpC) of Escherichia coli (strain K12).